The primary structure comprises 420 residues: Annetocin receptor (420 aa).

Over 1 to 54 the chain is Extracellular; sequence MEMDDDEAILLDDIYALASTPNQTIVTSSFPQTVSPGFLARRNEALAMVEVAVQ. A glycan (N-linked (GlcNAc...) asparagine) is linked at asparagine 22. A helical transmembrane segment spans residues 55–75; sequence STILILTVVGNAAVLAMIVSL. Residues 76–83 are Cytoplasmic-facing; it reads SRHKDLGR. Residues 84 to 104 traverse the membrane as a helical segment; the sequence is MYTMIGHLSCADLFVAIFNLL. Residues 105 to 124 are Extracellular-facing; sequence PQLLWDVTHRFRGGRVLCKL. Cysteine 122 and cysteine 201 are oxidised to a cystine. The helical transmembrane segment at 125–145 threads the bilayer; sequence VKYVQVVAMYASAYVLMSTAV. Residues 146-166 lie on the Cytoplasmic side of the membrane; it reads DRYTAICHPMRSHTWTSTTAH. Residues 167 to 187 form a helical membrane-spanning segment; the sequence is YLVIGAWVLALVFAVPQLVIF. Over 188-212 the chain is Extracellular; it reads DYVEVVPGSGVYDCVDHFRPRWTLP. A helical transmembrane segment spans residues 213-233; it reads VYITWFALAVYVIPLVVLATI. The Cytoplasmic portion of the chain corresponds to 234–328; that stretch reads YLRICVVVWK…KTKTVKLTLT (95 aa). Residues 329–349 traverse the membrane as a helical segment; that stretch reads VVISYLVCWAPFFVSHIWSAW. Over 350–360 the chain is Extracellular; the sequence is DPHAPFEGTEM. Residues 361-381 form a helical membrane-spanning segment; it reads VITLLLGSLNSCINPWIYLAF. Residues 382-420 are Cytoplasmic-facing; sequence SDQLRRKVTQCCPRSWGQRPSTLSHDSTDFRSGSRPTHS. The tract at residues 397 to 420 is disordered; it reads WGQRPSTLSHDSTDFRSGSRPTHS. Positions 399–420 are enriched in polar residues; that stretch reads QRPSTLSHDSTDFRSGSRPTHS.

It belongs to the G-protein coupled receptor 1 family. Vasopressin/oxytocin receptor subfamily. As to expression, nephridia in clitellum region.

The protein resides in the cell membrane. Functionally, receptor for annetocin. Activation by annetocin may induce egg-laying behavior through calcium-dependent signaling. This Eisenia fetida (Red wiggler worm) protein is Annetocin receptor.